A 205-amino-acid chain; its full sequence is Cytochrome c biogenesis ATP-binding export protein CcmA 1 (205 aa).

Positions 2 to 205 constitute an ABC transporter domain; sequence LEARDLYCER…LALTGGEAGL (204 aa). Position 34–41 (34–41) interacts with ATP; it reads GGNGAGKT.

The protein belongs to the ABC transporter superfamily. CcmA exporter (TC 3.A.1.107) family. As to quaternary structure, the complex is composed of two ATP-binding proteins (CcmA) and two transmembrane proteins (CcmB).

It localises to the cell inner membrane. The enzyme catalyses heme b(in) + ATP + H2O = heme b(out) + ADP + phosphate + H(+). Part of the ABC transporter complex CcmAB involved in the biogenesis of c-type cytochromes; once thought to export heme, this seems not to be the case, but its exact role is uncertain. Responsible for energy coupling to the transport system. In Salmonella paratyphi A (strain ATCC 9150 / SARB42), this protein is Cytochrome c biogenesis ATP-binding export protein CcmA 1.